We begin with the raw amino-acid sequence, 145 residues long: Ribonuclease P protein component (145 aa).

The span at 120–130 (LPAAPGTMPPA) shows a compositional bias: low complexity. The interval 120–145 (LPAAPGTMPPARTMHPSSLSPTEPDL) is disordered. The span at 134 to 145 (HPSSLSPTEPDL) shows a compositional bias: polar residues.

It belongs to the RnpA family. As to quaternary structure, consists of a catalytic RNA component (M1 or rnpB) and a protein subunit.

The catalysed reaction is Endonucleolytic cleavage of RNA, removing 5'-extranucleotides from tRNA precursor.. Functionally, RNaseP catalyzes the removal of the 5'-leader sequence from pre-tRNA to produce the mature 5'-terminus. It can also cleave other RNA substrates such as 4.5S RNA. The protein component plays an auxiliary but essential role in vivo by binding to the 5'-leader sequence and broadening the substrate specificity of the ribozyme. This chain is Ribonuclease P protein component, found in Xanthomonas oryzae pv. oryzae (strain MAFF 311018).